The primary structure comprises 337 residues: Large ribosomal subunit protein uL3 (337 aa).

This sequence belongs to the universal ribosomal protein uL3 family. As to quaternary structure, part of the 50S ribosomal subunit. Forms a cluster with proteins L14 and L24e.

One of the primary rRNA binding proteins, it binds directly near the 3'-end of the 23S rRNA, where it nucleates assembly of the 50S subunit. The protein is Large ribosomal subunit protein uL3 of Methanospirillum hungatei JF-1 (strain ATCC 27890 / DSM 864 / NBRC 100397 / JF-1).